Here is a 415-residue protein sequence, read N- to C-terminus: MSEVLFPAVRRRVVRPLARLFPSLRMSHARVLERTDHMTTTLEHPPVQHAQADIASGVLDIETGGKGRLRGRNLQPEPADPALSPALIRRHGLRRGDLVEGVCGDRRTLTDVVRVNGRTPDRRSRPHFADLTPLHPHERLRLEHPAAGLAGRVVDLLAPVGKGQRGLIVAPPKTGKTVLLQQFAAAVAGNHPEARLMVVLLDERPEEVTDMRRSVRGEVYSSTFDRSARQHIALAELVIERAKRLVEAGEDVVILLDSLTRLCRAHNNAASSGGRTLSGGVDAGALLGPKRFFGAARKAEEGGSLTILATALVETGSRADDFYFEELKSTGNMELRLSREPASRRVFPAVEPVGSGTRREELLLSGAETTALRGLRRALVARDGQSGLETLLERLRRTPDNATFLRQVQPTLPAG.

The 68-residue stretch at 52 to 119 (ADIASGVLDI…TDVVRVNGRT (68 aa)) folds into the Rho RNA-BD domain. Residues 161–166 (GKGQRG), 173–178 (KTGKTV), and Arg204 contribute to the ATP site.

The protein belongs to the Rho family. Homohexamer. The homohexamer assembles into an open ring structure.

Its function is as follows. Facilitates transcription termination by a mechanism that involves Rho binding to the nascent RNA, activation of Rho's RNA-dependent ATPase activity, and release of the mRNA from the DNA template. The protein is Transcription termination factor Rho of Streptomyces coelicolor (strain ATCC BAA-471 / A3(2) / M145).